A 408-amino-acid chain; its full sequence is Phosphoglycerate kinase (408 aa).

Substrate-binding positions include 24–26, arginine 39, 62–65, arginine 121, and arginine 161; these read DLN and HLGR. ATP is bound by residues lysine 211, glycine 307, glutamate 338, and 364–367; that span reads GGDS.

Belongs to the phosphoglycerate kinase family. In terms of assembly, monomer.

It is found in the cytoplasm. The catalysed reaction is (2R)-3-phosphoglycerate + ATP = (2R)-3-phospho-glyceroyl phosphate + ADP. It functions in the pathway carbohydrate degradation; glycolysis; pyruvate from D-glyceraldehyde 3-phosphate: step 2/5. In Pseudarthrobacter chlorophenolicus (strain ATCC 700700 / DSM 12829 / CIP 107037 / JCM 12360 / KCTC 9906 / NCIMB 13794 / A6) (Arthrobacter chlorophenolicus), this protein is Phosphoglycerate kinase.